Consider the following 515-residue polypeptide: MAEQVALSRTQVCGILREELYQGDAFHQADTHIFIIMGASGDLAKKKIYPTIWWLFRDGLLPEDTFIVGYARSRLTVDDIRKQSEPFFKVTPEERPKLEEFFARNSYVAGQYDDPASYKHLNSHMNALHQGMQANRLFYLALPPTVYEAVTKNIQEICMSQTGWNRIIVEKPFGRDLQSSNQLSNHISSLFREDQIYRIDHYLGKEMVQNLMVLRFANRIFGPIWNRDNIACVILTFKEPFGTEGRGGYFDEFGIIRDVMQNHLLQMLCLVAMEKPASTDSDDVRDEKVKVLKCISEVETDNVVLGQYVGNPSGEGEATNGYLDDPTVPHGSTTATFAAAVLYVENERWDGVPFILRCGKALNERKAEVRLQFRDVAGDIFHQQCKRNELVIRVQPNEAVYTKMMTKKPGMFFNPEESELDLTYGNRYKNVKLPDAYERLILDVFCGSQMHFVRSDELREAWRIFTPLLHKIDREKPQPIPYVYGSRGPTEADELMKRVGFQYEGTYKWVNPHKL.

An N-acetylalanine modification is found at Ala2. The residue at position 8 (Ser8) is a Phosphoserine. Thr10 carries the phosphothreonine modification. Residues 38-45 and Arg72 each bind NADP(+); that span reads GASGDLAK. Lys89 is subject to N6-acetyllysine. 2 residues coordinate NADP(+): Tyr147 and Lys171. Residues Lys171, 201-205, Glu239, and Asp258 each bind D-glucose 6-phosphate; that span reads HYLGK. Lys171 is subject to N6-(2-hydroxyisobutyryl)lysine; alternate. Lys171 is modified (N6-acetyllysine; alternate). His263 (proton acceptor) is an active-site residue. NADP(+) is bound at residue Arg357. D-glucose 6-phosphate contacts are provided by Lys360 and Arg365. Residues Lys366, Arg370, and Arg393 each contribute to the NADP(+) site. Gln395 provides a ligand contact to D-glucose 6-phosphate. NADP(+) contacts are provided by residues 401–403 and 421–423; these read YTK and DLT. Lys403 carries the post-translational modification N6-acetyllysine. Residue Lys432 is modified to N6-acetyllysine. Arg487 contacts NADP(+). Lys497 carries the post-translational modification N6-acetyllysine. Residues Tyr503 and Trp509 each contribute to the NADP(+) site. Tyr503 is modified (phosphotyrosine).

It belongs to the glucose-6-phosphate dehydrogenase family. As to quaternary structure, homotetramer; dimer of dimers. Interacts with SIRT2; the interaction is enhanced by H(2)O(2) treatment. Forms a ternary complex with ALDOB and TP53; this interaction is direct. ALDOB stabilizes the complex inhibiting G6PD activity and keeping oxidative pentose phosphate metabolism in check. Acetylated by ELP3 at Lys-403; acetylation inhibits its homodimerization and enzyme activity. Deacetylated by SIRT2 at Lys-403; deacetylation stimulates its enzyme activity.

It is found in the cytoplasm. It localises to the cytosol. Its subcellular location is the membrane. The catalysed reaction is D-glucose 6-phosphate + NADP(+) = 6-phospho-D-glucono-1,5-lactone + NADPH + H(+). It participates in carbohydrate degradation; pentose phosphate pathway; D-ribulose 5-phosphate from D-glucose 6-phosphate (oxidative stage): step 1/3. In terms of biological role, cytosolic glucose-6-phosphate dehydrogenase that catalyzes the first and rate-limiting step of the oxidative branch within the pentose phosphate pathway/shunt, an alternative route to glycolysis for the dissimilation of carbohydrates and a major source of reducing power and metabolic intermediates for fatty acid and nucleic acid biosynthetic processes. This is Glucose-6-phosphate 1-dehydrogenase (G6pdx) from Rattus norvegicus (Rat).